A 442-amino-acid polypeptide reads, in one-letter code: Proline--tRNA ligase (442 aa).

Belongs to the class-II aminoacyl-tRNA synthetase family. ProS type 2 subfamily. As to quaternary structure, homodimer.

The protein resides in the cytoplasm. The enzyme catalyses tRNA(Pro) + L-proline + ATP = L-prolyl-tRNA(Pro) + AMP + diphosphate. Catalyzes the attachment of proline to tRNA(Pro) in a two-step reaction: proline is first activated by ATP to form Pro-AMP and then transferred to the acceptor end of tRNA(Pro). This chain is Proline--tRNA ligase, found in Brucella ovis (strain ATCC 25840 / 63/290 / NCTC 10512).